The chain runs to 402 residues: La-related protein 7 homolog (402 aa).

Residues E64 to R138 form an HTH La-type RNA-binding-like region region. Residues I148–E230 are RRM-like region. The segment at D288 to L400 is xRRM-like region. The xRRM domain maps to D288–K402.

The protein belongs to the LARP7 family. As to quaternary structure, component of the telomerase holoenzyme complex composed minimally of trt1 and the telomerase RNA template component. Interacts with skp1.

The protein resides in the chromosome. It is found in the telomere. It localises to the nucleus. The protein localises to the cytoplasm. Its function is as follows. RNA-binding protein required for assembly of the holoenzyme telomerase ribonucleoprotein (RNP) complex. Specifically binds telomerase RNA ter1 and promotes assembly of ter1 with catalytic subunit trt1. Telomerase is a ribonucleoprotein enzyme essential that copies new telomeric repeats onto chromosome ends and functions to maintain cell division. The sequence is that of La-related protein 7 homolog from Schizosaccharomyces pombe (strain 972 / ATCC 24843) (Fission yeast).